A 144-amino-acid chain; its full sequence is MRLNTLSPAAGAKHAPKRVGRGMGSGLGKTAGRGHKGQKSRSGGGVRPGFEGGQMPLKIRLPKFGFTSRRAMVTAEVRVLELAKVNGDVIDLNALKDANVITRNIQFAKIVLSGTIERPVTVKGLKVTKGARAAIEAAGGKIEE.

The disordered stretch occupies residues 1–54 (MRLNTLSPAAGAKHAPKRVGRGMGSGLGKTAGRGHKGQKSRSGGGVRPGFEGGQ). 2 stretches are compositionally biased toward gly residues: residues 21–31 (RGMGSGLGKTA) and 42–52 (SGGGVRPGFEG).

The protein belongs to the universal ribosomal protein uL15 family. In terms of assembly, part of the 50S ribosomal subunit.

Functionally, binds to the 23S rRNA. This Shewanella oneidensis (strain ATCC 700550 / JCM 31522 / CIP 106686 / LMG 19005 / NCIMB 14063 / MR-1) protein is Large ribosomal subunit protein uL15.